The primary structure comprises 620 residues: Ran-binding protein 10 (620 aa).

The tract at residues 1 to 38 is disordered; that stretch reads MAAATADPGAGNPQAGDSSGGDSGGGLPSPGEQELSRR. Ala2 bears the N-acetylalanine mark. Over residues 18-28 the composition is skewed to gly residues; sequence SSGGDSGGGLP. Positions 35–222 constitute a B30.2/SPRY domain; the sequence is LSRRLQRLYP…VDANFGQQPF (188 aa). A LisH domain is found at 253 to 285; the sequence is WQAVLQNMVSSYLVHHGYCSTATAFARMTETPI. In terms of domain architecture, CTLH spans 291-348; sequence SIKNRQKIQKLVLEGRVGEAIETTQRFYPGLLEHNPNLLFMLKCRQFVEMVNGTDSEV. Over residues 347–398 the composition is skewed to polar residues; it reads EVRSLSSRSPKSQDSYPGSPSLSPRHGPSSSHIHNTGADSPSCSNGVASTKN. The tract at residues 347–460 is disordered; the sequence is EVRSLSSRSP…SDSEMEMEAE (114 aa). Residue Ser361 is modified to Phosphoserine. Tyr362 bears the Phosphotyrosine mark. A phosphoserine mark is found at Ser365, Ser367, Ser369, and Ser422. Low complexity predominate over residues 409-436; that stretch reads SSSSSSSSSSSSSSPSSVNYSESNSTDS. Polar residues predominate over residues 437 to 450; that stretch reads TKSQPHSSTSNQET. Phosphoserine is present on residues Ser451 and Ser453.

This sequence belongs to the RANBP9/10 family. May form homodimers. Identified in the CTLH complex that contains GID4, RANBP9 and/or RANBP10, MKLN1, MAEA, RMND5A (or alternatively its paralog RMND5B), GID8, ARMC8, WDR26 and YPEL5. Within this complex, MAEA, RMND5A (or alternatively its paralog RMND5B), GID8, WDR26, and RANBP9 and/or RANBP10 form the catalytic core, while GID4, MKLN1, ARMC8 and YPEL5 have ancillary roles. Interacts with RAN and RANBP9. Interacts with the HGF receptor MET. Interacts with AR. Interacts with TUBB1. Interacts with YPEL5. May interact with TUBB5. Interacts with DDX4. As to expression, expressed at highest levels in spleen and liver. Expressed in megakaryocytes and platelets (at protein level).

Its subcellular location is the cytoplasm. The protein localises to the nucleus. Functionally, may act as an adapter protein to couple membrane receptors to intracellular signaling pathways. Core component of the CTLH E3 ubiquitin-protein ligase complex that selectively accepts ubiquitin from UBE2H and mediates ubiquitination and subsequent proteasomal degradation of the transcription factor HBP1. Enhances dihydrotestosterone-induced transactivation activity of AR, as well as dexamethasone-induced transactivation activity of NR3C1, but does not affect estrogen-induced transactivation. Acts as a guanine nucleotide exchange factor (GEF) for RAN GTPase. May play an essential role in hemostasis and in maintaining microtubule dynamics with respect to both platelet shape and function. The polypeptide is Ran-binding protein 10 (Ranbp10) (Mus musculus (Mouse)).